A 360-amino-acid chain; its full sequence is Blue-light-activated histidine kinase 1 (360 aa).

In terms of domain architecture, PAS spans 38 to 109 (LFLETTQQTR…KLREGIAAER (72 aa)). C85 is subject to S-4a-FMN cysteine. The PAC domain maps to 109–163 (RYTVVDLLNYRKDGIPFWNAVHVGPIYGEDGTLQYFYGSQWDITDIVAERRKAET). Phosphohistidine; by autocatalysis is present on H173. The segment at 260-303 (RSVTALGLALHELATNAVKYGALSVDAGRVEISWSREDGDVTLV) is HWE histidine kinase domain.

In terms of processing, FMN binds covalently to cysteine after exposure to blue light and this bond is spontaneously broken in the dark.

The catalysed reaction is ATP + protein L-histidine = ADP + protein N-phospho-L-histidine.. Functionally, photosensitive kinase that is involved in increased bacterial virulence upon exposure to light. This Erythrobacter litoralis (strain HTCC2594) protein is Blue-light-activated histidine kinase 1.